The sequence spans 353 residues: MSVVFLLQTRPGFERDAQQEARTVALERRGLELKPVETGEGFVLLQSDAPLTPFGWRDLAFSRTLSRVIADIQLGDRDRLTPILDVVGQKAMTFASIWLEWPDTNDGKAMSGFARKFQPLLEEKLATAGRLGQDASTRLQLFFPSKSRVLVSVSEPQWGAPWPLGILRLRMPTDAPSRSTLKLAEAFEVFLGEQGQQDKLKPGMTAVDLGAAPGGWTWQLLRRGIKVYAVDNGPMKGSCDGHPLVKHLRQDGFRFRPPHPVDWLVCDMVERPGRVAELMADWLAEGAARQAVFNLKLPMKKRAEALSDALERIEARMLAAGLAYTLQVKQLYHDREEVTVYLARPAATGRRRR.

S-adenosyl-L-methionine is bound by residues S179, 212 to 215 (APGG), D231, D251, and D267. K296 (proton acceptor) is an active-site residue.

Belongs to the class I-like SAM-binding methyltransferase superfamily. RNA methyltransferase RlmE family. RlmM subfamily. In terms of assembly, monomer.

It localises to the cytoplasm. The enzyme catalyses cytidine(2498) in 23S rRNA + S-adenosyl-L-methionine = 2'-O-methylcytidine(2498) in 23S rRNA + S-adenosyl-L-homocysteine + H(+). In terms of biological role, catalyzes the 2'-O-methylation at nucleotide C2498 in 23S rRNA. The protein is Ribosomal RNA large subunit methyltransferase M of Laribacter hongkongensis (strain HLHK9).